Reading from the N-terminus, the 604-residue chain is Inactive all-trans-retinol 13,14-reductase (604 aa).

A signal peptide spans 1-17 (MWWILLFLEWFVDWARG).

Belongs to the carotenoid/retinoid oxidoreductase family. CrtISO subfamily.

The polypeptide is Inactive all-trans-retinol 13,14-reductase (retsatl) (Danio rerio (Zebrafish)).